The chain runs to 301 residues: UDP-N-acetylenolpyruvoylglucosamine reductase 1 (301 aa).

An FAD-binding PCMH-type domain is found at 29-196 (KIGGPADILI…LEAEFQLQIG (168 aa)). Arginine 174 is an active-site residue. The active-site Proton donor is serine 225. Glutamate 295 is a catalytic residue.

The protein belongs to the MurB family. FAD serves as cofactor.

It localises to the cytoplasm. It carries out the reaction UDP-N-acetyl-alpha-D-muramate + NADP(+) = UDP-N-acetyl-3-O-(1-carboxyvinyl)-alpha-D-glucosamine + NADPH + H(+). The protein operates within cell wall biogenesis; peptidoglycan biosynthesis. In terms of biological role, cell wall formation. This chain is UDP-N-acetylenolpyruvoylglucosamine reductase 1 (murB1), found in Bacillus anthracis.